Reading from the N-terminus, the 885-residue chain is Glycerol-3-phosphate acyltransferase (885 aa).

A compositionally biased stretch (pro residues) spans 1–17; sequence MPEQNPLPFPDGQPSPP. A disordered region spans residues 1 to 26; the sequence is MPEQNPLPFPDGQPSPPSTAAADTGA. The short motif at 362–367 is the HXXXXD motif element; that stretch reads HRSHMD.

Belongs to the GPAT/DAPAT family.

Its subcellular location is the cell inner membrane. The enzyme catalyses sn-glycerol 3-phosphate + an acyl-CoA = a 1-acyl-sn-glycero-3-phosphate + CoA. Its pathway is phospholipid metabolism; CDP-diacylglycerol biosynthesis; CDP-diacylglycerol from sn-glycerol 3-phosphate: step 1/3. This Xanthomonas axonopodis pv. citri (strain 306) protein is Glycerol-3-phosphate acyltransferase.